The following is a 789-amino-acid chain: Protein translocase subunit SecA (789 aa).

Residues Gln-85, 103-107 (GEGKT), and Asp-492 each bind ATP.

The protein belongs to the SecA family. In terms of assembly, monomer and homodimer. Part of the essential Sec protein translocation apparatus which comprises SecA, SecYEG and auxiliary proteins SecDF. Other proteins may also be involved.

Its subcellular location is the cell membrane. It localises to the cytoplasm. It carries out the reaction ATP + H2O + cellular proteinSide 1 = ADP + phosphate + cellular proteinSide 2.. Part of the Sec protein translocase complex. Interacts with the SecYEG preprotein conducting channel. Has a central role in coupling the hydrolysis of ATP to the transfer of proteins into and across the cell membrane, serving as an ATP-driven molecular motor driving the stepwise translocation of polypeptide chains across the membrane. This chain is Protein translocase subunit SecA, found in Limosilactobacillus fermentum (strain NBRC 3956 / LMG 18251) (Lactobacillus fermentum).